The following is a 260-amino-acid chain: ATP synthase subunit a (260 aa).

The next 6 helical transmembrane spans lie at 37–57 (FTNA…FMTL), 95–115 (FFPF…IGMF), 125–145 (IVVT…TGFV), 154–174 (VFVP…IEII), 191–211 (MLAG…FMTM), and 233–253 (EFLV…MYLH).

It belongs to the ATPase A chain family. As to quaternary structure, F-type ATPases have 2 components, CF(1) - the catalytic core - and CF(0) - the membrane proton channel. CF(1) has five subunits: alpha(3), beta(3), gamma(1), delta(1), epsilon(1). CF(0) has three main subunits: a(1), b(2) and c(9-12). The alpha and beta chains form an alternating ring which encloses part of the gamma chain. CF(1) is attached to CF(0) by a central stalk formed by the gamma and epsilon chains, while a peripheral stalk is formed by the delta and b chains.

The protein localises to the cell inner membrane. In terms of biological role, key component of the proton channel; it plays a direct role in the translocation of protons across the membrane. The protein is ATP synthase subunit a of Parvibaculum lavamentivorans (strain DS-1 / DSM 13023 / NCIMB 13966).